Here is a 360-residue protein sequence, read N- to C-terminus: Photosystem II protein D1 (360 aa).

Transmembrane regions (helical) follow at residues 29–46, 118–133, and 142–156; these read YIGW…AATA, HFLL…QWEL, and WICV…SATA. Residue H118 participates in chlorophyll a binding. Residue Y126 participates in pheophytin a binding. [CaMn4O5] cluster-binding residues include D170 and E189. A helical transmembrane segment spans residues 197–218; the sequence is FHMLGVAGVFGGSLFSAMHGSL. H198 serves as a coordination point for chlorophyll a. A quinone contacts are provided by residues H215 and 264–265; that span reads SF. H215 lines the Fe cation pocket. H272 contacts Fe cation. Residues 274-288 traverse the membrane as a helical segment; that stretch reads FLAAWPVVGIWFTAL. [CaMn4O5] cluster contacts are provided by H332, E333, D342, and A344. Residues 345-360 constitute a propeptide that is removed on maturation; sequence AGEVAPVALTAPAING.

Belongs to the reaction center PufL/M/PsbA/D family. As to quaternary structure, PSII is composed of 1 copy each of membrane proteins PsbA, PsbB, PsbC, PsbD, PsbE, PsbF, PsbH, PsbI, PsbJ, PsbK, PsbL, PsbM, PsbT, PsbX, PsbY, PsbZ, Psb30/Ycf12, peripheral proteins PsbO, CyanoQ (PsbQ), PsbU, PsbV and a large number of cofactors. It forms dimeric complexes. The D1/D2 heterodimer binds P680, chlorophylls that are the primary electron donor of PSII, and subsequent electron acceptors. It shares a non-heme iron and each subunit binds pheophytin, quinone, additional chlorophylls, carotenoids and lipids. D1 provides most of the ligands for the Mn4-Ca-O5 cluster of the oxygen-evolving complex (OEC). There is also a Cl(-1) ion associated with D1 and D2, which is required for oxygen evolution. The PSII complex binds additional chlorophylls, carotenoids and specific lipids. is required as a cofactor. Post-translationally, tyr-161 forms a radical intermediate that is referred to as redox-active TyrZ, YZ or Y-Z. In terms of processing, C-terminally processed by CtpA; processing is essential to allow assembly of the oxygen-evolving complex and thus photosynthetic growth.

Its subcellular location is the cellular thylakoid membrane. The catalysed reaction is 2 a plastoquinone + 4 hnu + 2 H2O = 2 a plastoquinol + O2. Functionally, photosystem II (PSII) is a light-driven water:plastoquinone oxidoreductase that uses light energy to abstract electrons from H(2)O, generating O(2) and a proton gradient subsequently used for ATP formation. It consists of a core antenna complex that captures photons, and an electron transfer chain that converts photonic excitation into a charge separation. The D1/D2 (PsbA/PsbD) reaction center heterodimer binds P680, the primary electron donor of PSII as well as several subsequent electron acceptors. The polypeptide is Photosystem II protein D1 (Microchaete diplosiphon (Fremyella diplosiphon)).